The chain runs to 505 residues: Surface lipoprotein assembly modifier 2 (505 aa).

An N-terminal signal peptide occupies residues 1 to 19 (MLYFRYGFLVVWCAAGVSA). Positions 23–188 (ADAPAILDDK…RFRKKTEGLT (166 aa)) are N-terminal domain. Residues 189 to 505 (GWRFSGGISP…EVFVSADWRF (317 aa)) are C-terminal probable beta barrel. Transmembrane regions (beta stranded) follow at residues 190–200 (WRFSGGISPAV), 232–243 (LNYEIEAEKLTP), 248–258 (HYLLFRSNIGG), 273–283 (FGRAYLGWQYK), 287–297 (QTAGILPFYQV), 326–335 (VGVQLSHTYR), 340–350 (WQFSVALEHYR), 368–377 (GFYVSSAKRL), 381–391 (ATVFGGWQFVR), 411–420 (NGVYAGWAQE), 427–437 (LNSRVSASYAR), 456–465 (WNVSLALSHD), 472–482 (IVPALNYRFGR), and 495–505 (SEVFVSADWRF).

It belongs to the Slam family.

Its subcellular location is the cell outer membrane. Its function is as follows. Required for correct export to the cell surface of cell outer membrane lipoprotein HpuA heterologously in E.coli (hpuA does not exist in N.meningitidis strain MC58). In Neisseria meningitidis serogroup B (strain ATCC BAA-335 / MC58), this protein is Surface lipoprotein assembly modifier 2.